Consider the following 277-residue polypeptide: Large ribosomal subunit protein uL2 (277 aa).

The interval 219 to 277 is disordered; it reads TVRGSVMNPNDHPHGGGEGKAPVGRKAPSTPWGKPALGLKTRNKKAKSDKLIVRRRNQK.

Belongs to the universal ribosomal protein uL2 family. Part of the 50S ribosomal subunit. Forms a bridge to the 30S subunit in the 70S ribosome.

Functionally, one of the primary rRNA binding proteins. Required for association of the 30S and 50S subunits to form the 70S ribosome, for tRNA binding and peptide bond formation. It has been suggested to have peptidyltransferase activity; this is somewhat controversial. Makes several contacts with the 16S rRNA in the 70S ribosome. This is Large ribosomal subunit protein uL2 from Streptococcus suis (strain 98HAH33).